The chain runs to 580 residues: MDFEDDYVHSTCRGAYQDFNGMDRDYGPGSYGGLDRDYGHGSYGGQRSMDSYLNQSYGMDNHSGGGGGSRFGPYESYDSRSSLGGRDLYRSGYGFNEPEQTRFGGSYGGRFESSYRNSLDSFGGRNQGGSSWEAPYSRSKLRPGFMEDRGRENYSSYSSFSSPHMKPAPVGSRGRGTPAYPESTFGSRSYDAFGGPSTGRGRGRGHMGDFGSFHRPGIIVDYQNKPANVTIATARGIKRKMMQIFIKPGGAFIKKPKLAKPMDKMNLSKSPTKTDPKNEEEEKRRIEARREKQRRRREKNSEKYGDGYRMAFTCSFCKFRTFEEKDIELHLESSSHQETLDHIQKQTKFDKVVMEFLHECMVNKFKKASIRKQQTLNHPEAYKIIEKDIMEGVTADDHMMKVETVHCSACSVYIPALHSSVQLHLKSPDHSKGKQAYKEQIKRESVLTATSILNNPIVKARYERFVKGENPFEIQDHPQDQQIEGDEEDEEKIDEPIEEEEEEEEEEEEEGEEAGSVEEEGDVEGEEGTAEAAAAGEADAVGEAEGAGEAEEAEEEEEEEGTQEFAAQACATEQCEHRQM.

A mediates transcriptional activation region spans residues 1-124 (MDFEDDYVHS…YRNSLDSFGG (124 aa)). Phosphoserine is present on residues Ser48, Ser56, Ser63, Ser69, Ser81, Ser82, Ser91, Ser106, Ser114, Ser118, Ser121, and Ser137. Residue Lys140 forms a Glycyl lysine isopeptide (Lys-Gly) (interchain with G-Cter in SUMO2) linkage. The segment at 156-196 (SYSSFSSPHMKPAPVGSRGRGTPAYPESTFGSRSYDAFGGP) is disordered. Arg173 carries the omega-N-methylarginine modification. The residue at position 212 (Ser212) is a Phosphoserine. Position 235 is an omega-N-methylarginine (Arg235). The Bipartite nuclear localization signal motif lies at 238–260 (KRKMMQIFIKPGGAFIKKPKLAK). Lys240 participates in a covalent cross-link: Glycyl lysine isopeptide (Lys-Gly) (interchain with G-Cter in SUMO2). The residue at position 247 (Lys247) is an N6-acetyllysine; alternate. Residue Lys247 forms a Glycyl lysine isopeptide (Lys-Gly) (interchain with G-Cter in SUMO2); alternate linkage. Glycyl lysine isopeptide (Lys-Gly) (interchain with G-Cter in SUMO2) cross-links involve residues Lys254 and Lys264. Positions 256 to 302 (PKLAKPMDKMNLSKSPTKTDPKNEEEEKRRIEARREKQRRRREKNSE) are disordered. Residue Ser270 is modified to Phosphoserine. Residues 272–290 (TKTDPKNEEEEKRRIEARR) show a composition bias toward basic and acidic residues. The C2H2 AKAP95-type 1 zinc-finger motif lies at 314-336 (CSFCKFRTFEEKDIELHLESSSH). Residue Lys401 forms a Glycyl lysine isopeptide (Lys-Gly) (interchain with G-Cter in SUMO2) linkage. The C2H2 AKAP95-type 2 zinc-finger motif lies at 407–430 (CSACSVYIPALHSSVQLHLKSPDH). Residues Lys459 and Lys467 each participate in a glycyl lysine isopeptide (Lys-Gly) (interchain with G-Cter in SUMO2) cross-link. The tract at residues 470 to 580 (NPFEIQDHPQ…ATEQCEHRQM (111 aa)) is disordered. A compositionally biased stretch (acidic residues) spans 483–529 (IEGDEEDEEKIDEPIEEEEEEEEEEEEEGEEAGSVEEEGDVEGEEGT). Residues 530 to 539 (AEAAAAGEAD) are compositionally biased toward low complexity. A compositionally biased stretch (acidic residues) spans 540-562 (AVGEAEGAGEAEEAEEEEEEEGT).

Belongs to the AKAP95 family. In terms of assembly, component of the DBIRD complex. Interacts with CCAR2; the interaction is direct. Ubiquitously expressed in adult tissues. Highly expressed in neuronal tissues such as brain and neural tube.

It is found in the nucleus matrix. Functionally, core component of the DBIRD complex, a multiprotein complex that acts at the interface between core mRNP particles and RNA polymerase II (RNAPII) and integrates transcript elongation with the regulation of alternative splicing: the DBIRD complex affects local transcript elongation rates and alternative splicing of a large set of exons embedded in (A + T)-rich DNA regions. May also play a role in neuronal differentiation. Able to bind DNA and activate expression in vitro. In Mus musculus (Mouse), this protein is DBIRD complex subunit ZNF326 (Znf326).